Reading from the N-terminus, the 604-residue chain is Deuterosome assembly protein 1 (604 aa).

4 coiled-coil regions span residues 14–59 (CEAE…NAQT), 85–197 (MTQN…GKKQ), 226–278 (IIEK…ELQS), and 336–399 (QDQP…KQLK). Residue serine 547 is modified to Phosphoserine. A coiled-coil region spans residues 558–601 (AAQHFLLEEEKRAKELEKLLNTHIDELQRHTEFTLNKYSKLKQN).

It belongs to the CEP63 family. In terms of assembly, interacts with CEP152; the interaction is mutually exclusive with CEP63.

The protein localises to the cytoplasm. Functionally, key structural component of the deuterosome, a structure that promotes de novo centriole amplification in multiciliated cells. Deuterosome-mediated centriole amplification occurs in terminally differentiated multiciliated cells and can generate more than 100 centrioles. Probably sufficient for the specification and formation of the deuterosome inner core. Interacts with CEP152 and recruits PLK4 to activate centriole biogenesis. The sequence is that of Deuterosome assembly protein 1 from Homo sapiens (Human).